A 355-amino-acid chain; its full sequence is UDP-N-acetylglucosamine--N-acetylmuramyl-(pentapeptide) pyrophosphoryl-undecaprenol N-acetylglucosamine transferase (355 aa).

UDP-N-acetyl-alpha-D-glucosamine is bound by residues 14-16 (TGG), Asn126, Arg164, Ser190, Ile243, 262-267 (ALTVAE), and Gln288.

This sequence belongs to the glycosyltransferase 28 family. MurG subfamily.

The protein resides in the cell inner membrane. The catalysed reaction is di-trans,octa-cis-undecaprenyl diphospho-N-acetyl-alpha-D-muramoyl-L-alanyl-D-glutamyl-meso-2,6-diaminopimeloyl-D-alanyl-D-alanine + UDP-N-acetyl-alpha-D-glucosamine = di-trans,octa-cis-undecaprenyl diphospho-[N-acetyl-alpha-D-glucosaminyl-(1-&gt;4)]-N-acetyl-alpha-D-muramoyl-L-alanyl-D-glutamyl-meso-2,6-diaminopimeloyl-D-alanyl-D-alanine + UDP + H(+). The protein operates within cell wall biogenesis; peptidoglycan biosynthesis. In terms of biological role, cell wall formation. Catalyzes the transfer of a GlcNAc subunit on undecaprenyl-pyrophosphoryl-MurNAc-pentapeptide (lipid intermediate I) to form undecaprenyl-pyrophosphoryl-MurNAc-(pentapeptide)GlcNAc (lipid intermediate II). This is UDP-N-acetylglucosamine--N-acetylmuramyl-(pentapeptide) pyrophosphoryl-undecaprenol N-acetylglucosamine transferase from Psychromonas ingrahamii (strain DSM 17664 / CCUG 51855 / 37).